The primary structure comprises 194 residues: Cysteine and glycine-rich protein 3 (194 aa).

The tract at residues 1–5 (MPNWG) is interaction with TCAP. In terms of domain architecture, LIM zinc-binding 1 spans 10-61 (CGACEKTVYHAEEIQCNGRSFHKTCFHCMACRKALDSTTVAAHESEIYCKVC). A Nuclear localization signal motif is present at residues 64–69 (RRYGPK). An interaction with CLF2 and isoform 2 region spans residues 94–105 (QSPKPARSVTTS). Phosphoserine is present on residues Ser-95 and Ser-153. The 52-residue stretch at 120–171 (CPRCGKSVYAAEKVMGGGKPWHKTCFRCAICGKSLESTNVTDKDGELYCKVC) folds into the LIM zinc-binding 2 domain.

In terms of assembly, self-associates. Oligomeric in the cytoplasm and monomeric in the nucleus. Homooligomers preferentially form along the actin cytoskeleton. Isoform 2 interacts with isoform 1. Isoform 1 but not isoform 2 interacts with MYOD1 and MYOG. Isoform 1 interacts with TCAP, ACTN2 and NRAP. Isoform 2 interacts with TCAP and alpha-actinin. Interacts with LDHD. Interacts (via N-terminus)with GLRX3 (via C-terminus) and PPP3CA; GLRX3 and calcineurin compete for interaction with CSRP3. Interacts with MYF6. Interacts with CFL2; the stoichiometry influences F-actin depolymerization and possibly two molecules of CFL2 can interact with one molecule of CSRP3 resulting in the highest functional impact; the interaction is stronger with phosphorylated CFL2. Phosphorylated by PKC/PRKCA. As to expression, cardiac and slow-twitch skeletal muscles. Isoform 2 is expressed in striated muscle. Isoform 2 is specifically expressed at higher levels in patients with neuromuscular diseases, such as limb-girdle muscular dystrophy 2A (LGMD2A), Duchenne muscular dystrophy (DMD) and dermatomyositis.

It is found in the nucleus. The protein resides in the cytoplasm. Its subcellular location is the cytoskeleton. The protein localises to the myofibril. It localises to the sarcomere. It is found in the z line. Its function is as follows. Positive regulator of myogenesis. Acts as a cofactor for myogenic bHLH transcription factors such as MYOD1, and probably MYOG and MYF6. Enhances the DNA-binding activity of the MYOD1:TCF3 isoform E47 complex and may promote formation of a functional MYOD1:TCF3 isoform E47:MEF2A complex involved in myogenesis. Plays a crucial and specific role in the organization of cytosolic structures in cardiomyocytes. Could play a role in mechanical stretch sensing. May be a scaffold protein that promotes the assembly of interacting proteins at Z-line structures. It is essential for calcineurin anchorage to the Z line. Required for stress-induced calcineurin-NFAT activation. The role in regulation of cytoskeleton dynamics by association with CFL2 is reported conflictingly: Shown to enhance CFL2-mediated F-actin depolymerization dependent on the CSRP3:CFL2 molecular ratio, and also shown to reduce the ability of CLF1 and CFL2 to enhance actin depolymerization. Proposed to contribute to the maintenance of muscle cell integrity through an actin-based mechanism. Can directly bind to actin filaments, cross-link actin filaments into bundles without polarity selectivity and protect them from dilution- and cofilin-mediated depolymerization; the function seems to involve its self-association. In vitro can inhibit PKC/PRKCA activity. Proposed to be involved in cardiac stress signaling by down-regulating excessive PKC/PRKCA signaling. In terms of biological role, may play a role in early sarcomere organization. Overexpression in myotubes negatively regulates myotube differentiation. By association with isoform 1 and thus changing the CSRP3 isoform 1:CFL2 stoichiometry is proposed to down-regulate CFL2-mediated F-actin depolymerization. In Homo sapiens (Human), this protein is Cysteine and glycine-rich protein 3 (CSRP3).